The chain runs to 333 residues: Photosystem II assembly lipoprotein Ycf48 (333 aa).

A signal peptide spans 1 to 23 (MNRLLSSAVNLLLVLVLGVGLSG). Cys-24 is lipidated: N-palmitoyl cysteine. A lipid anchor (S-diacylglycerol cysteine) is attached at Cys-24.

Belongs to the Ycf48 family. Part of early PSII assembly complexes which includes D1 (psbA) and PsbI; not found in mature PSII. Binds to the lumenal side of PSII complexes. Interacts with YidC.

It is found in the cellular thylakoid membrane. Functionally, a factor required for optimal assembly of photosystem II (PSII), acting in the early stages of PSII assembly. Also plays a role in replacement of photodamaged D1 (psbA). Assists YidC in synthesis of chlorophyll-binding proteins. The sequence is that of Photosystem II assembly lipoprotein Ycf48 from Synechococcus sp. (strain CC9902).